Here is a 177-residue protein sequence, read N- to C-terminus: Translationally-controlled tumor protein homolog (177 aa).

The TCTP domain occupies 1–177 (MIIYRDLFSG…IKQGLVVEKC (177 aa)).

This sequence belongs to the TCTP family.

Its subcellular location is the cytoplasm. Functionally, involved in calcium binding and microtubule stabilization. The polypeptide is Translationally-controlled tumor protein homolog (Trichinella pseudospiralis (Parasitic roundworm)).